The following is a 198-amino-acid chain: (S)-2-hydroxypropylphosphonic acid epoxidase (198 aa).

The HTH cro/C1-type domain occupies 15–70; it reads LKDRREQVKMDHAALASLLGETPETVAAWENGEGGELTLTQLGRIAHVLGTSIGAL. Lysine 23 lines the substrate pocket. Residues 26 to 45 constitute a DNA-binding region (H-T-H motif); sequence HAALASLLGETPETVAAWEN. Substrate is bound by residues arginine 97, tyrosine 105, 135–138, and glutamate 142; that span reads NSGH. The Cupin type-2 domain maps to 136 to 196; it reads SGHAGNEFLF…GTGSAKLIAV (61 aa). The Fe cation site is built by histidine 138, glutamate 142, and histidine 180.

This sequence belongs to the non-heme iron-dependent dioxygenase family. Homotetramer. The cofactor is Fe(2+).

It catalyses the reaction (S)-2-hydroxypropylphosphonate + H2O2 = (1R,2S)-epoxypropylphosphonate + 2 H2O. It functions in the pathway antibiotic biosynthesis; fosfomycin biosynthesis. Functionally, non-heme-dependent dioxygenase that catalyzes the oxidative epoxidation of (S)-2-hydroxypropylphosphonate into (1R,2S)-epoxypropylphosphonate, the final step in the biosynthesis of fosfomycin antibiotic. This is (S)-2-hydroxypropylphosphonic acid epoxidase (hppE) from Streptomyces wedmorensis.